The primary structure comprises 530 residues: MQSPATKGTLALAVLAVSLIMAGCASMGDNKPQSARIEANALDAGAAIRAADRDAGWPAADWWRAYRDPQLDTWIAAAQAGXPDARGRRGRVREAQAMARVARSAELPQINGNLSLMRQHWPDNVYYGPGPLANTDTWNNTGTLGLSYHLDLWGKDKNATERALDTAHATAADARAAKLELEVNVVRAYVGMSMNYALLDLAHETFERQRSLADLARKRLQAGLGTQLEVSQAESTLPDYERQIDSYEEAIQLARHQLAALAGKGPGAGDAIKRPRLSLDAPAGLPSAMPADLLGRRPDVVAARWTVDAQARGIDVAKASFYPNIDLLATVGGFGVTAPFTDFLRAMNGGWTAGPALSLPIFEGGRLRAQLGAANAGVRPGGRAIQPDDRRRAQGHRRPGRADPFARYAEEGRRTLGGRQRPQLPAVARRLPPRPDRLRQRAGRAAAIVGAHRKRPPHRSERLAAHAQLMAALGGGVETGTDVPGSQSSHGESAAGAAAPAAASGAKPVAAAARPAQVAAAGAAGVPAAR.

The N-terminal stretch at 1–23 (MQSPATKGTLALAVLAVSLIMAG) is a signal peptide. C24 is lipidated: N-palmitoyl cysteine. A lipid anchor (S-diacylglycerol cysteine) is attached at C24. 2 disordered regions span residues 375–442 (NAGV…RQRA) and 476–530 (GVET…PAAR). 2 stretches are compositionally biased toward low complexity: residues 421–430 (RPQLPAVARR) and 494–530 (AAGA…PAAR).

Belongs to the outer membrane factor (OMF) (TC 1.B.17) family.

Its subcellular location is the cell membrane. Functionally, involved in the resistance (detoxification) of the fungal toxin fusaric acid. The sequence is that of Fusaric acid resistance protein FusA (fusA) from Burkholderia cepacia (Pseudomonas cepacia).